The chain runs to 239 residues: Exosome complex component Rrp4 (239 aa).

The S1 motif domain occupies 67–139; that stretch reads GDFVVGIVEE…PVQRVELSLL (73 aa). In terms of domain architecture, KH spans 151–217; the sequence is QGGQVVEIDP…LAVRAIREIE (67 aa).

It belongs to the RRP4 family. As to quaternary structure, component of the archaeal exosome complex. Forms a trimer of Rrp4 and/or Csl4 subunits. The trimer associates with a hexameric ring-like arrangement composed of 3 Rrp41-Rrp42 heterodimers.

It localises to the cytoplasm. In terms of biological role, non-catalytic component of the exosome, which is a complex involved in RNA degradation. Increases the RNA binding and the efficiency of RNA degradation. Confers strong poly(A) specificity to the exosome. The chain is Exosome complex component Rrp4 from Methanopyrus kandleri (strain AV19 / DSM 6324 / JCM 9639 / NBRC 100938).